The following is a 175-amino-acid chain: Myosin regulatory light chain 2, atrial isoform (175 aa).

An N-acetylalanine modification is found at Ala-2. A phosphoserine mark is found at Ser-22 and Ser-23. EF-hand domains lie at 32–67 (AQIQ…LGKV), 102–137 (DPEE…QADK), and 138–173 (FSPA…GDEK). The Ca(2+) site is built by Asp-45, Asn-47, Asp-49, and Asp-56.

In terms of assembly, myosin is a hexamer of 2 heavy chains and 4 light chains.

This Sus scrofa (Pig) protein is Myosin regulatory light chain 2, atrial isoform (MYL7).